The chain runs to 166 residues: NADPH-dependent 7-cyano-7-deazaguanine reductase (166 aa).

The Thioimide intermediate role is filled by cysteine 57. The active-site Proton donor is aspartate 64. Substrate is bound by residues 79–81 and 98–99; these read VES and HE.

The protein belongs to the GTP cyclohydrolase I family. QueF type 1 subfamily.

It is found in the cytoplasm. It carries out the reaction 7-aminomethyl-7-carbaguanine + 2 NADP(+) = 7-cyano-7-deazaguanine + 2 NADPH + 3 H(+). The protein operates within tRNA modification; tRNA-queuosine biosynthesis. Its function is as follows. Catalyzes the NADPH-dependent reduction of 7-cyano-7-deazaguanine (preQ0) to 7-aminomethyl-7-deazaguanine (preQ1). This chain is NADPH-dependent 7-cyano-7-deazaguanine reductase, found in Alkaliphilus metalliredigens (strain QYMF).